The following is a 183-amino-acid chain: Ribosome maturation factor RimP (183 aa).

This sequence belongs to the RimP family.

The protein localises to the cytoplasm. In terms of biological role, required for maturation of 30S ribosomal subunits. This Mycobacterium bovis (strain ATCC BAA-935 / AF2122/97) protein is Ribosome maturation factor RimP.